Reading from the N-terminus, the 631-residue chain is 1-deoxy-D-xylulose-5-phosphate synthase (631 aa).

Residues H73, 113–115, N174, Y285, and E367 each bind thiamine diphosphate; that span reads SHA. Residue N174 participates in Mg(2+) binding.

It belongs to the transketolase family. DXPS subfamily. Homodimer. Mg(2+) serves as cofactor. Requires thiamine diphosphate as cofactor.

It catalyses the reaction D-glyceraldehyde 3-phosphate + pyruvate + H(+) = 1-deoxy-D-xylulose 5-phosphate + CO2. Its pathway is metabolic intermediate biosynthesis; 1-deoxy-D-xylulose 5-phosphate biosynthesis; 1-deoxy-D-xylulose 5-phosphate from D-glyceraldehyde 3-phosphate and pyruvate: step 1/1. Its function is as follows. Catalyzes the acyloin condensation reaction between C atoms 2 and 3 of pyruvate and glyceraldehyde 3-phosphate to yield 1-deoxy-D-xylulose-5-phosphate (DXP). The chain is 1-deoxy-D-xylulose-5-phosphate synthase from Streptomyces sp. (strain CL190).